The primary structure comprises 346 residues: Transposase for insertion sequence element IS1533 (346 aa).

It belongs to the transposase IS1111A/IS1328/IS1533 family.

Functionally, required for the transposition of the insertion element. This Leptospira borgpetersenii protein is Transposase for insertion sequence element IS1533 (tnhA).